A 182-amino-acid chain; its full sequence is Large ribosomal subunit protein uL10 (182 aa).

The protein belongs to the universal ribosomal protein uL10 family. Part of the ribosomal stalk of the 50S ribosomal subunit. The N-terminus interacts with L11 and the large rRNA to form the base of the stalk. The C-terminus forms an elongated spine to which L12 dimers bind in a sequential fashion forming a multimeric L10(L12)X complex.

Its function is as follows. Forms part of the ribosomal stalk, playing a central role in the interaction of the ribosome with GTP-bound translation factors. The protein is Large ribosomal subunit protein uL10 of Gluconacetobacter diazotrophicus (strain ATCC 49037 / DSM 5601 / CCUG 37298 / CIP 103539 / LMG 7603 / PAl5).